We begin with the raw amino-acid sequence, 405 residues long: Aminodeoxyfutalosine deaminase (405 aa).

Positions 61 and 63 each coordinate a divalent metal cation. Glu141, Ser145, and His179 together coordinate substrate. His206 is a binding site for a divalent metal cation. Glu209 functions as the Proton donor in the catalytic mechanism. An a divalent metal cation-binding site is contributed by Asp306.

It belongs to the metallo-dependent hydrolases superfamily. Requires a divalent metal cation as cofactor.

The catalysed reaction is 6-amino-6-deoxyfutalosine + H2O + H(+) = futalosine + NH4(+). Its pathway is quinol/quinone metabolism; menaquinone biosynthesis. Its function is as follows. Catalyzes the deamination of aminodeoxyfutalosine (AFL) into futalosine (FL), a step in the biosynthesis of menaquinone (MK, vitamin K2). To a lesser extent, can also deaminate 5'-methylthioadenosine. This is Aminodeoxyfutalosine deaminase from Nitratiruptor sp. (strain SB155-2).